The sequence spans 332 residues: 2,3-diketo-L-gulonate reductase (332 aa).

The active-site Proton donor is the His-44. NAD(+) is bound by residues 168–174 (ITMVDMS), 224–225 (WK), and 304–306 (GHE).

This sequence belongs to the LDH2/MDH2 oxidoreductase family. DlgD subfamily. As to quaternary structure, homodimer.

Its subcellular location is the cytoplasm. It catalyses the reaction 3-dehydro-L-gulonate + NAD(+) = 2,3-dioxo-L-gulonate + NADH + H(+). The enzyme catalyses 3-dehydro-L-gulonate + NADP(+) = 2,3-dioxo-L-gulonate + NADPH + H(+). Its function is as follows. Catalyzes the reduction of 2,3-diketo-L-gulonate in the presence of NADH, to form 3-keto-L-gulonate. This is 2,3-diketo-L-gulonate reductase from Escherichia coli (strain SMS-3-5 / SECEC).